Reading from the N-terminus, the 307-residue chain is 4-hydroxythreonine-4-phosphate dehydrogenase (307 aa).

Substrate contacts are provided by His126 and Thr127. A divalent metal cation contacts are provided by His156, His195, and His251. Substrate-binding residues include Lys259, Asn268, and Arg277.

This sequence belongs to the PdxA family. In terms of assembly, homodimer. It depends on Zn(2+) as a cofactor. Requires Mg(2+) as cofactor. Co(2+) is required as a cofactor.

The protein resides in the cytoplasm. The enzyme catalyses 4-(phosphooxy)-L-threonine + NAD(+) = 3-amino-2-oxopropyl phosphate + CO2 + NADH. The protein operates within cofactor biosynthesis; pyridoxine 5'-phosphate biosynthesis; pyridoxine 5'-phosphate from D-erythrose 4-phosphate: step 4/5. In terms of biological role, catalyzes the NAD(P)-dependent oxidation of 4-(phosphooxy)-L-threonine (HTP) into 2-amino-3-oxo-4-(phosphooxy)butyric acid which spontaneously decarboxylates to form 3-amino-2-oxopropyl phosphate (AHAP). This is 4-hydroxythreonine-4-phosphate dehydrogenase from Helicobacter pylori (strain G27).